The chain runs to 151 residues: Small ribosomal subunit protein uS15z (151 aa).

The protein belongs to the universal ribosomal protein uS15 family.

This Arabidopsis thaliana (Mouse-ear cress) protein is Small ribosomal subunit protein uS15z (RPS13A).